A 172-amino-acid chain; its full sequence is 3-hydroxydecanoyl-[acyl-carrier-protein] dehydratase (172 aa).

Histidine 71 is a catalytic residue.

The protein belongs to the thioester dehydratase family. FabA subfamily. In terms of assembly, homodimer.

It localises to the cytoplasm. It carries out the reaction a (3R)-hydroxyacyl-[ACP] = a (2E)-enoyl-[ACP] + H2O. The catalysed reaction is (3R)-hydroxydecanoyl-[ACP] = (2E)-decenoyl-[ACP] + H2O. The enzyme catalyses (2E)-decenoyl-[ACP] = (3Z)-decenoyl-[ACP]. The protein operates within lipid metabolism; fatty acid biosynthesis. In terms of biological role, necessary for the introduction of cis unsaturation into fatty acids. Catalyzes the dehydration of (3R)-3-hydroxydecanoyl-ACP to E-(2)-decenoyl-ACP and then its isomerization to Z-(3)-decenoyl-ACP. Can catalyze the dehydratase reaction for beta-hydroxyacyl-ACPs with saturated chain lengths up to 16:0, being most active on intermediate chain length. This is 3-hydroxydecanoyl-[acyl-carrier-protein] dehydratase from Vibrio cholerae serotype O1 (strain ATCC 39541 / Classical Ogawa 395 / O395).